Consider the following 715-residue polypeptide: Fatty acid oxidation complex subunit alpha (715 aa).

The segment at 1 to 189 is enoyl-CoA hydratase/isomerase; sequence MIYQGETLSV…KVGAIDAVVA (189 aa). A substrate-binding site is contributed by Asp296. The 3-hydroxyacyl-CoA dehydrogenase stretch occupies residues 311-715; it reads AKATRHAAVL…EMAAQGKTFY (405 aa). Residues Met325, Asp344, 401-403, Lys408, and Ser430 contribute to the NAD(+) site; that span reads VVE. Residue His451 is the For 3-hydroxyacyl-CoA dehydrogenase activity of the active site. Asn454 is a binding site for NAD(+). Asn501 and Tyr661 together coordinate substrate.

This sequence in the N-terminal section; belongs to the enoyl-CoA hydratase/isomerase family. It in the C-terminal section; belongs to the 3-hydroxyacyl-CoA dehydrogenase family. Heterotetramer of two alpha chains (FadB) and two beta chains (FadA).

The enzyme catalyses a (3S)-3-hydroxyacyl-CoA + NAD(+) = a 3-oxoacyl-CoA + NADH + H(+). It carries out the reaction a (3S)-3-hydroxyacyl-CoA = a (2E)-enoyl-CoA + H2O. It catalyses the reaction a 4-saturated-(3S)-3-hydroxyacyl-CoA = a (3E)-enoyl-CoA + H2O. The catalysed reaction is (3S)-3-hydroxybutanoyl-CoA = (3R)-3-hydroxybutanoyl-CoA. The enzyme catalyses a (3Z)-enoyl-CoA = a 4-saturated (2E)-enoyl-CoA. It carries out the reaction a (3E)-enoyl-CoA = a 4-saturated (2E)-enoyl-CoA. It functions in the pathway lipid metabolism; fatty acid beta-oxidation. Involved in the aerobic and anaerobic degradation of long-chain fatty acids via beta-oxidation cycle. Catalyzes the formation of 3-oxoacyl-CoA from enoyl-CoA via L-3-hydroxyacyl-CoA. It can also use D-3-hydroxyacyl-CoA and cis-3-enoyl-CoA as substrate. The chain is Fatty acid oxidation complex subunit alpha from Aeromonas salmonicida (strain A449).